The sequence spans 202 residues: FMN-dependent NADH:quinone oxidoreductase (202 aa).

Residues Ser10, 16–18, and 96–99 each bind FMN; these read SAS and MWNF.

The protein belongs to the azoreductase type 1 family. As to quaternary structure, homodimer. Requires FMN as cofactor.

It carries out the reaction 2 a quinone + NADH + H(+) = 2 a 1,4-benzosemiquinone + NAD(+). The enzyme catalyses N,N-dimethyl-1,4-phenylenediamine + anthranilate + 2 NAD(+) = 2-(4-dimethylaminophenyl)diazenylbenzoate + 2 NADH + 2 H(+). Its function is as follows. Quinone reductase that provides resistance to thiol-specific stress caused by electrophilic quinones. Functionally, also exhibits azoreductase activity. Catalyzes the reductive cleavage of the azo bond in aromatic azo compounds to the corresponding amines. This is FMN-dependent NADH:quinone oxidoreductase from Beijerinckia indica subsp. indica (strain ATCC 9039 / DSM 1715 / NCIMB 8712).